A 372-amino-acid chain; its full sequence is MANLFPALRTPLYNLITEQTTKLTTFGGWEMPVQFAGLKQEHQAVREKVGMFDISHMGKFVLTGQKVLAALQSLVPSDLDRLTPGKAQYTVLLNAQGGIIDDIIVYDQGKNPEGQERVTLIVNAATTVKDKQWLLEHLPEEIDFQDLSREKVLIALQGPEALTILQPLVDQNLGELPAFGHLEAEFLREKAFIARTGYTGEDGFEIMVSPEVGKQLWQTFGSKGVTPCGLGARDTLRLEAGMGLYGQDMNDETTPLEAGLGWLVHLDSKGDFIGRAVLTEQKANGVEKRLVGLEMLAKQIARHDYPILHNGEIMGIVTSGTLSPTLQKAIALGYVPTELAKVGQELEVEVRGKTYGIKVVKKLFYRSEQKPR.

Belongs to the GcvT family. As to quaternary structure, the glycine cleavage system is composed of four proteins: P, T, L and H.

It catalyses the reaction N(6)-[(R)-S(8)-aminomethyldihydrolipoyl]-L-lysyl-[protein] + (6S)-5,6,7,8-tetrahydrofolate = N(6)-[(R)-dihydrolipoyl]-L-lysyl-[protein] + (6R)-5,10-methylene-5,6,7,8-tetrahydrofolate + NH4(+). In terms of biological role, the glycine cleavage system catalyzes the degradation of glycine. This is Aminomethyltransferase from Synechocystis sp. (strain ATCC 27184 / PCC 6803 / Kazusa).